The sequence spans 89 residues: Small ribosomal subunit protein uS15 (89 aa).

Over residues 1 to 18 (MALSAQEKDAIVKEHQTS) the composition is skewed to basic and acidic residues. The disordered stretch occupies residues 1 to 25 (MALSAQEKDAIVKEHQTSETDTGSP).

This sequence belongs to the universal ribosomal protein uS15 family. In terms of assembly, part of the 30S ribosomal subunit. Forms a bridge to the 50S subunit in the 70S ribosome, contacting the 23S rRNA.

In terms of biological role, one of the primary rRNA binding proteins, it binds directly to 16S rRNA where it helps nucleate assembly of the platform of the 30S subunit by binding and bridging several RNA helices of the 16S rRNA. Forms an intersubunit bridge (bridge B4) with the 23S rRNA of the 50S subunit in the ribosome. The protein is Small ribosomal subunit protein uS15 of Teredinibacter turnerae (strain ATCC 39867 / T7901).